Here is a 199-residue protein sequence, read N- to C-terminus: MEPLVTHKGKAAVLNRINVDTDQIIPKQFLKRIERTGYGRFAFFDWRYLADGSPNPDFELNQPIYEGSSILIAGENFGCGSSREHAPWALDDYGFKIVIAPSFADIFHQNCFKNGMLPIRLDYDVWKTFAASYENKGYEMTVDLEKQQIEDHEGNITPFDVDPHWREMLLNGYDEISLTLLLEDDIQAFEDKRSSWLRA.

The protein belongs to the LeuD family. LeuD type 1 subfamily. Heterodimer of LeuC and LeuD.

It catalyses the reaction (2R,3S)-3-isopropylmalate = (2S)-2-isopropylmalate. It participates in amino-acid biosynthesis; L-leucine biosynthesis; L-leucine from 3-methyl-2-oxobutanoate: step 2/4. Its function is as follows. Catalyzes the isomerization between 2-isopropylmalate and 3-isopropylmalate, via the formation of 2-isopropylmaleate. This Bacillus pumilus (strain SAFR-032) protein is 3-isopropylmalate dehydratase small subunit.